The primary structure comprises 37 residues: Large ribosomal subunit protein bL36 (37 aa).

Belongs to the bacterial ribosomal protein bL36 family.

The polypeptide is Large ribosomal subunit protein bL36 (Francisella tularensis subsp. mediasiatica (strain FSC147)).